The primary structure comprises 327 residues: DNA-directed RNA polymerase subunit alpha (327 aa).

Residues 1–233 are alpha N-terminal domain (alpha-NTD); that stretch reads MVREKVKVST…NLFIPFLHVE (233 aa). Residues 267 to 327 form an alpha C-terminal domain (alpha-CTD) region; the sequence is LAFQYIFIDQ…KKILDILEKK (61 aa).

This sequence belongs to the RNA polymerase alpha chain family. In plastids the minimal PEP RNA polymerase catalytic core is composed of four subunits: alpha, beta, beta', and beta''. When a (nuclear-encoded) sigma factor is associated with the core the holoenzyme is formed, which can initiate transcription.

It localises to the plastid. The protein resides in the chloroplast. It catalyses the reaction RNA(n) + a ribonucleoside 5'-triphosphate = RNA(n+1) + diphosphate. Functionally, DNA-dependent RNA polymerase catalyzes the transcription of DNA into RNA using the four ribonucleoside triphosphates as substrates. This is DNA-directed RNA polymerase subunit alpha from Nasturtium officinale (Watercress).